The chain runs to 215 residues: Small ribosomal subunit protein uS5 (215 aa).

The segment at 1–62 is disordered; sequence MTDSSPQSNP…QERDSEWQER (62 aa). Positions 9–28 are enriched in low complexity; the sequence is NPNAVPGAADVPAAAEGQQQ. Positions 29 to 61 are enriched in basic and acidic residues; the sequence is EQRRGGGRGERGDRRGGRRGDRRNQERDSEWQE. In terms of domain architecture, S5 DRBM spans 59–122; it reads WQERVVQIRR…ADGKKHLVKV (64 aa).

This sequence belongs to the universal ribosomal protein uS5 family. As to quaternary structure, part of the 30S ribosomal subunit. Contacts proteins S4 and S8.

With S4 and S12 plays an important role in translational accuracy. In terms of biological role, located at the back of the 30S subunit body where it stabilizes the conformation of the head with respect to the body. This chain is Small ribosomal subunit protein uS5, found in Parasynechococcus marenigrum (strain WH8102).